The primary structure comprises 157 residues: uncharacterized protein (157 aa).

A helical transmembrane segment spans residues 6-26 (LVGGVLRVLVVVGAVFDVAVL). A Ricin B-type lectin domain is found at 33-157 (ADGPVQLKSR…APDQQWDSVP (125 aa)).

The protein resides in the membrane. This is an uncharacterized protein from Mycobacterium tuberculosis (strain CDC 1551 / Oshkosh).